The sequence spans 777 residues: Proton-coupled zinc antiporter SLC30A5 (777 aa).

The Cytoplasmic portion of the chain corresponds to 1 to 28; that stretch reads MEEKYSSNVMSSGRLGPVDAPESRLTRY. Residues 29–49 form a helical membrane-spanning segment; it reads IVLLCFTKFLKALGIFESYDL. Residues 50–52 are Lumenal-facing; it reads LKV. Residues 53 to 73 traverse the membrane as a helical segment; the sequence is VHIVQFIFILKLGSTCFMVLF. Topologically, residues 74-94 are cytoplasmic; the sequence is QKPFSSGKSITKRQWVSIVKH. A helical membrane pass occupies residues 95–115; sequence AFVSCIISLLWFFGLTLCGPL. At 116–117 the chain is on the lumenal side; it reads RT. A helical transmembrane segment spans residues 118–138; the sequence is LLLFEHSDIVVISLLTVLFTG. Topologically, residues 139–148 are cytoplasmic; it reads SGGGPSKTRG. The chain crosses the membrane as a helical span at residues 149-169; it reads AAFFIIAVICLLLFDNDDLMA. Residues 170–189 lie on the Lumenal side of the membrane; that stretch reads KIAEHPEGHHDSALTHFLYR. The helical transmembrane segment at 190–210 threads the bilayer; that stretch reads AFFLLGVADHKGGVLLLVLAL. The Cytoplasmic portion of the chain corresponds to 211–234; sequence CFNVGFHTASRKLSLDIGGAKRLQ. The helical transmembrane segment at 235 to 255 threads the bilayer; the sequence is ALSHLVSVIILSPWVIILSAT. Residues 256–263 are Lumenal-facing; that stretch reads TESKIESW. The chain crosses the membrane as a helical span at residues 264–284; it reads SALIMPFMTVIFSVMIMDFYV. The Cytoplasmic segment spans residues 285–299; sequence ESVCSVKMEPSKCAR. The helical transmembrane segment at 300-320 threads the bilayer; sequence YGSFLIFASALLLGNFWTHPI. Residues 321 to 338 are Lumenal-facing; it reads TDQLRAMNKPAHQLHTEH. Residues 339–359 form a helical membrane-spanning segment; that stretch reads VLSGGVVVSAIFFILSAQILA. The Cytoplasmic segment spans residues 360-414; it reads SSSRKGQRGTLVGYSPEGTPLYNFMGDALHNTSPSMPRFLKDSLKQILEEYDSRQ. The helical transmembrane segment at 415–435 threads the bilayer; the sequence is IFYFLCLNLAFTFVEIFYGVW. The Lumenal portion of the chain corresponds to 436–444; it reads TNSLGLLSD. A helical transmembrane segment spans residues 445-465; that stretch reads GFHMLFDCSALVMGLIAALMT. Residues H447 and D451 each coordinate Zn(2+). At 466-484 the chain is on the cytoplasmic side; it reads RWKATRIFSYGYGRVEILS. Residues 485–505 form a helical membrane-spanning segment; the sequence is GFINGLFLVVIAFFVFIEAVA. Over 506 to 516 the chain is Lumenal; sequence RIYDPPDINTD. A helical transmembrane segment spans residues 517-537; it reads MLTPVSVGGLIVNLVGICAFS. The interval 538–586 is his-rich loop; required for zinc transport; sequence HAHSHGAARGGCPSHDHGHSHHGHGHSHGHNHGHSHSDHGHNHGHTHNH. The Cytoplasmic segment spans residues 538–604; sequence HAHSHGAARG…VGMNANMRGV (67 aa). The interval 547–593 is disordered; that stretch reads GGCPSHDHGHSHHGHGHSHGHNHGHSHSDHGHNHGHTHNHGHSHGSA. Composition is skewed to basic residues over residues 555-571 and 579-589; these read GHSH…NHGH and NHGHTHNHGHS. The chain crosses the membrane as a helical span at residues 605-625; the sequence is FSHVLADTLGSVGVIVSTILI. 2 residues coordinate Zn(2+): H607 and D611. At 626–629 the chain is on the lumenal side; it reads RQFG. A helical transmembrane segment spans residues 630–650; that stretch reads WLIADPLCSLFIAVLIFGSVL. The Cytoplasmic segment spans residues 651-777; it reads PLLKDACQVI…KYYKDGTYIM (127 aa).

This sequence belongs to the cation diffusion facilitator (CDF) transporter (TC 2.A.4) family. SLC30A subfamily. Heterodimer with SLC30A6/ZNT6; form a functional zinc ion transmembrane transporter.

It localises to the golgi apparatus. The protein resides in the golgi stack membrane. Its subcellular location is the cytoplasmic vesicle. The protein localises to the COPII-coated vesicle membrane. It is found in the secretory vesicle membrane. It localises to the trans-Golgi network membrane. The catalysed reaction is Zn(2+)(in) + 2 H(+)(out) = Zn(2+)(out) + 2 H(+)(in). Functionally, together with SLC30A6 forms a functional proton-coupled zinc ion antiporter mediating zinc entry into the lumen of organelles along the secretory pathway. By contributing to zinc ion homeostasis within the early secretory pathway, regulates the activation and folding of enzymes like alkaline phosphatases and enzymes involved in phosphatidylinositol glycan anchor biosynthesis. This Xenopus tropicalis (Western clawed frog) protein is Proton-coupled zinc antiporter SLC30A5 (slc30a5).